We begin with the raw amino-acid sequence, 227 residues long: Ion-translocating oxidoreductase complex subunit E (227 aa).

The next 6 membrane-spanning stretches (helical) occupy residues 18 to 38, 39 to 59, 69 to 89, 93 to 113, 125 to 145, and 182 to 202; these read ALVQ…VTNA, LGLG…VSLV, IPVF…LMNA, GLYL…IIIG, LPAV…LVLL, and HFLL…LIAL.

The protein belongs to the NqrDE/RnfAE family. In terms of assembly, the complex is composed of six subunits: RnfA, RnfB, RnfC, RnfD, RnfE and RnfG.

It is found in the cell inner membrane. In terms of biological role, part of a membrane-bound complex that couples electron transfer with translocation of ions across the membrane. This is Ion-translocating oxidoreductase complex subunit E from Aliivibrio fischeri (strain MJ11) (Vibrio fischeri).